We begin with the raw amino-acid sequence, 130 residues long: Small ribosomal subunit protein uS11 (130 aa).

It belongs to the universal ribosomal protein uS11 family. Part of the 30S ribosomal subunit. Interacts with proteins S7 and S18. Binds to IF-3.

Its function is as follows. Located on the platform of the 30S subunit, it bridges several disparate RNA helices of the 16S rRNA. Forms part of the Shine-Dalgarno cleft in the 70S ribosome. The protein is Small ribosomal subunit protein uS11 of Syntrophus aciditrophicus (strain SB).